Reading from the N-terminus, the 61-residue chain is MPTTRQCSFCGHEIPPGTGLMYVRNDGTMLWFCSSKCRKSMLKYHRDPKKYKWTTRYMKVR.

Zn(2+) is bound by residues C7, C10, C33, and C37. A C4-type zinc finger spans residues 7–37; that stretch reads CSFCGHEIPPGTGLMYVRNDGTMLWFCSSKC.

It belongs to the eukaryotic ribosomal protein eL24 family. Part of the 50S ribosomal subunit. Forms a cluster with proteins L3 and L14. Zn(2+) serves as cofactor.

Functionally, binds to the 23S rRNA. The polypeptide is Large ribosomal subunit protein eL24 (Saccharolobus islandicus (strain M.16.27) (Sulfolobus islandicus)).